Consider the following 500-residue polypeptide: Glycerol kinase (500 aa).

ADP is bound at residue threonine 13. ATP is bound by residues threonine 13, threonine 14, and serine 15. Threonine 13 provides a ligand contact to sn-glycerol 3-phosphate. Position 17 (arginine 17) interacts with ADP. Positions 83, 84, 135, and 244 each coordinate sn-glycerol 3-phosphate. Residues arginine 83, glutamate 84, tyrosine 135, aspartate 244, and glutamine 245 each contribute to the glycerol site. Threonine 266 and glycine 309 together coordinate ADP. ATP-binding residues include threonine 266, glycine 309, glutamine 313, and glycine 410. ADP contacts are provided by glycine 410 and asparagine 414.

This sequence belongs to the FGGY kinase family.

The enzyme catalyses glycerol + ATP = sn-glycerol 3-phosphate + ADP + H(+). Its pathway is polyol metabolism; glycerol degradation via glycerol kinase pathway; sn-glycerol 3-phosphate from glycerol: step 1/1. Its activity is regulated as follows. Inhibited by fructose 1,6-bisphosphate (FBP). Its function is as follows. Key enzyme in the regulation of glycerol uptake and metabolism. Catalyzes the phosphorylation of glycerol to yield sn-glycerol 3-phosphate. The chain is Glycerol kinase from Burkholderia vietnamiensis (strain G4 / LMG 22486) (Burkholderia cepacia (strain R1808)).